The following is a 587-amino-acid chain: Putative adenylate cyclase 3 (587 aa).

The 116-residue stretch at 12 to 127 folds into the Guanylate cyclase domain; sequence AILAADAVGY…DGVNVAARIE (116 aa). TPR repeat units follow at residues 343 to 376, 421 to 454, 455 to 488, 490 to 522, and 524 to 556; these read LLVR…DPGM, PQGH…DPNS, ANAY…DPQF, LSLH…APRS, and MTRF…NPSF.

Belongs to the adenylyl cyclase class-3 family.

The catalysed reaction is ATP = 3',5'-cyclic AMP + diphosphate. This chain is Putative adenylate cyclase 3 (cya3), found in Rhizobium meliloti (strain 1021) (Ensifer meliloti).